Here is a 290-residue protein sequence, read N- to C-terminus: ATP synthase gamma chain (290 aa).

Belongs to the ATPase gamma chain family. As to quaternary structure, F-type ATPases have 2 components, CF(1) - the catalytic core - and CF(0) - the membrane proton channel. CF(1) has five subunits: alpha(3), beta(3), gamma(1), delta(1), epsilon(1). CF(0) has three main subunits: a, b and c.

It localises to the cell membrane. Functionally, produces ATP from ADP in the presence of a proton gradient across the membrane. The gamma chain is believed to be important in regulating ATPase activity and the flow of protons through the CF(0) complex. The chain is ATP synthase gamma chain from Wolbachia pipientis subsp. Culex pipiens (strain wPip).